The following is a 266-amino-acid chain: L-cystine-binding protein TcyJ (266 aa).

Positions 1-29 are cleaved as a signal peptide; that stretch reads MKLAHLGRQALMGVMAVALVAGMSVKSFA.

Belongs to the bacterial solute-binding protein 3 family. The complex is composed of two ATP-binding proteins (TcyN), two transmembrane proteins (TcyL) and a solute-binding protein (TcyJ).

The protein localises to the periplasm. Its function is as follows. Part of the ABC transporter complex TcyJLN involved in L-cystine import. Binds cystine. This chain is L-cystine-binding protein TcyJ, found in Escherichia coli O6:H1 (strain CFT073 / ATCC 700928 / UPEC).